The following is a 574-amino-acid chain: Isocitrate dehydrogenase kinase/phosphatase (574 aa).

ATP contacts are provided by residues 315 to 321 (APGIRGM) and lysine 336. The active site involves aspartate 371.

Belongs to the AceK family.

It is found in the cytoplasm. It catalyses the reaction L-seryl-[isocitrate dehydrogenase] + ATP = O-phospho-L-seryl-[isocitrate dehydrogenase] + ADP + H(+). Functionally, bifunctional enzyme which can phosphorylate or dephosphorylate isocitrate dehydrogenase (IDH) on a specific serine residue. This is a regulatory mechanism which enables bacteria to bypass the Krebs cycle via the glyoxylate shunt in response to the source of carbon. When bacteria are grown on glucose, IDH is fully active and unphosphorylated, but when grown on acetate or ethanol, the activity of IDH declines drastically concomitant with its phosphorylation. The protein is Isocitrate dehydrogenase kinase/phosphatase of Escherichia coli (strain SMS-3-5 / SECEC).